The following is a 339-amino-acid chain: Cobalt-precorrin-5B C(1)-methyltransferase (339 aa).

Belongs to the CbiD family.

It catalyses the reaction Co-precorrin-5B + S-adenosyl-L-methionine = Co-precorrin-6A + S-adenosyl-L-homocysteine. It functions in the pathway cofactor biosynthesis; adenosylcobalamin biosynthesis; cob(II)yrinate a,c-diamide from sirohydrochlorin (anaerobic route): step 6/10. Its function is as follows. Catalyzes the methylation of C-1 in cobalt-precorrin-5B to form cobalt-precorrin-6A. The sequence is that of Cobalt-precorrin-5B C(1)-methyltransferase from Methanosarcina acetivorans (strain ATCC 35395 / DSM 2834 / JCM 12185 / C2A).